The primary structure comprises 603 residues: MNLSNISAVKVLTLVVSAAIAGQVCAAESIVNYESANAISKQPEGSVRFIVKYKDGTPSSQGLKTRSTTKVMASGMQVAGFEAQFVRTTGLGAGIFAVPELKTTKEAHLVMDTIASNPDVEFVEVDRLAYPKAAPNDPSYRQQWHYFGNYGVKANKVWDRGFTGQGVVVSVVDTGILDHVDLNGNMLPGYDFISSAPNARDGDQRDNNPADEGDWFDNWDCGGYPDPRREKKFSTWHGSHVAGTIAAVTNNGVGVAGVAYGAKVIPVRVLGKCGGYDSDITDGMYWSAGGHIDGVPDNQNPAQVVNMSLGGGGGCSQNSQRMIDKTTNLGALIVIAAGNENQDASRTWPSSCNNVLSVGATTPKGKRAPFSNYGARVHLAAPGTNILSTIDVGQAGPVRSSYGMKAGTSMAAPHVSGVAALVISAANSIGKTLTPSELSDILVRTTSRFNGRLDRGLGSGIVDANAAVNAVLGDQNRAQPRPPVNQPINSGNKVYRSDRRVAIRDLRSVTSGIRVNDQARVGSANITLTLDIRYGDRSQLAVELIAPSGRVYPIYHDGKRQPNIVGPATFSVKNERLQGTWTLKVTDKARGVTGSIDSWSLTF.

An N-terminal signal peptide occupies residues Met1–Ala21. Positions Gly22 to Lys132 are excised as a propeptide. In terms of domain architecture, Peptidase S8 spans Gln143–Val468. Catalysis depends on Asp173, which acts as the Charge relay system. The disordered stretch occupies residues Pro197 to Cys221. Intrachain disulfides connect Cys221-Cys273 and Cys315-Cys352. His237 functions as the Charge relay system in the catalytic mechanism. The active-site Charge relay system is the Ser409. Positions Arg477 to Phe603 are excised as a propeptide. The P/Homo B domain occupies Ala478–Phe603.

This sequence belongs to the peptidase S8 family.

It is found in the secreted. This Dichelobacter nodosus (Bacteroides nodosus) protein is Extracellular basic protease (bprV).